A 222-amino-acid chain; its full sequence is MLKAMPASESSGWTLVVPVKTLVAAKTRLSEAAGPHRAALAVAIACDTVEAALSCVIVARIVVVTGDPLAAEALGGVGAHVVGDPEAGLNAALRRGAQEAVRLAPGDAVGALQADLPALRPAELALVLTAAAEFEQAFLPDAADVGTTFYGVRPGVPFTPGFGGESRDRHLRRGAKEICLDGIDSVRRDVDTPDDLRAALALGLGPRTLAMVERIRGGFPSP.

Phosphoenolpyruvate is bound by residues Thr-147, Gly-163, and Ser-166.

It belongs to the CofC family.

It carries out the reaction phosphoenolpyruvate + GTP + H(+) = enolpyruvoyl-2-diphospho-5'-guanosine + diphosphate. It functions in the pathway cofactor biosynthesis; coenzyme F420 biosynthesis. In terms of biological role, guanylyltransferase that catalyzes the activation of phosphoenolpyruvate (PEP) as enolpyruvoyl-2-diphospho-5'-guanosine, via the condensation of PEP with GTP. It is involved in the biosynthesis of coenzyme F420, a hydride carrier cofactor. This is Phosphoenolpyruvate guanylyltransferase from Streptosporangium roseum (strain ATCC 12428 / DSM 43021 / JCM 3005 / KCTC 9067 / NCIMB 10171 / NRRL 2505 / NI 9100).